A 207-amino-acid chain; its full sequence is Heat shock protein beta-1 (207 aa).

R12 is modified (omega-N-methylarginine). Position 13 is a phosphoserine (S13). S15 carries the phosphoserine; by MAPKAPK2 and MAPKAPK3 modification. Phosphoserine is present on S27. The segment at 72–207 is interaction with TGFB1I1; sequence APAYSRLLSR…AGKSEKPGTK (136 aa). Residues 78 to 186 form the sHSP domain; that stretch reads LLSRQLSSGV…QSAEITIPVT (109 aa). A phosphoserine; by MAPKAPK2, MAPKAPK3 and MAPKAPK5 mark is found at S80 and S84. S85, S88, and S100 each carry phosphoserine. N6-acetyllysine is present on K125. The interval 151 to 181 is disordered; sequence DPTQVSSSLSPEGTLSVEAPLPKPATQSAEI. A compositionally biased stretch (polar residues) spans 153–163; sequence TQVSSSLSPEG. T176 carries the phosphothreonine modification. Residues S178 and S201 each carry the phosphoserine modification.

The protein belongs to the small heat shock protein (HSP20) family. As to quaternary structure, homooligomer. Homodimer; becomes monomeric upon activation. Heterooligomer; with HSPB6. Associates with alpha- and beta-tubulin. Interacts with TGFB1I1. Interacts with CRYAB. Interacts with HSPB8. Interacts with HSPBAP1. Post-translationally, phosphorylated upon exposure to protein kinase C activators and heat shock. Phosphorylation by MAPKAPK2 and MAPKAPK3 in response to stress dissociates HSPB1 from large small heat-shock protein (sHsps) oligomers and impairs its chaperone activity and ability to protect against oxidative stress effectively. Phosphorylation by MAPKAPK5 in response to PKA stimulation induces F-actin rearrangement.

The protein resides in the cytoplasm. The protein localises to the nucleus. It is found in the cytoskeleton. Its subcellular location is the spindle. Its function is as follows. Small heat shock protein which functions as a molecular chaperone probably maintaining denatured proteins in a folding-competent state. Plays a role in stress resistance and actin organization. Through its molecular chaperone activity may regulate numerous biological processes including the phosphorylation and the axonal transport of neurofilament proteins. This Sus scrofa (Pig) protein is Heat shock protein beta-1 (HSPB1).